A 301-amino-acid chain; its full sequence is NADH-cytochrome b5 reductase 3 (301 aa).

Glycine 2 carries N-myristoyl glycine lipidation. An FAD-binding FR-type domain is found at 40–152 (DIKYPLRLID…RGPNGLLVYQ (113 aa)). N6-acetyllysine is present on lysine 42. Tyrosine 43 is subject to Phosphotyrosine. Lysine 50 bears the N6-acetyllysine mark. 6 residues coordinate FAD: arginine 92, proline 93, tyrosine 94, valine 109, lysine 111, and phenylalanine 114. Lysine 120 is modified (N6-acetyllysine). FAD-binding residues include lysine 126, methionine 127, serine 128, and threonine 185.

It belongs to the flavoprotein pyridine nucleotide cytochrome reductase family. Component of a complex composed of cytochrome b5, NADH-cytochrome b5 reductase (CYB5R3) and MTARC2. Interacts with MTLN; the interaction is required to maintain cellular lipid composition and leads to stimulation of mitochondrial respiratory complex I activity. FAD is required as a cofactor.

The protein resides in the endoplasmic reticulum membrane. Its subcellular location is the mitochondrion outer membrane. It carries out the reaction 2 Fe(III)-[cytochrome b5] + NADH = 2 Fe(II)-[cytochrome b5] + NAD(+) + H(+). Functionally, catalyzes the reduction of two molecules of cytochrome b5 using NADH as the electron donor. This chain is NADH-cytochrome b5 reductase 3 (CYB5R3), found in Bos taurus (Bovine).